The sequence spans 420 residues: Phosphoglycerate kinase (420 aa).

(2R)-3-phosphoglycerate contacts are provided by valine 24, aspartate 25, phenylalanine 26, asparagine 27, arginine 40, serine 63, histidine 64, glycine 66, arginine 67, leucine 122, arginine 123, histidine 170, and arginine 171. Residue glycine 214 coordinates ADP. CDP is bound at residue glycine 214. The AMP site is built by alanine 215 and lysine 216. Alanine 215 is an ATP binding site. Residue alanine 215 participates in Mg(2+) binding. CDP is bound at residue aspartate 219. Aspartate 219 serves as a coordination point for Mg(2+). Lysine 220 contributes to the AMP binding site. Lysine 220 contacts ATP. Residue glycine 238 coordinates ADP. Glycine 238 serves as a coordination point for CDP. Residues glycine 239 and glycine 313 each contribute to the AMP site. The ATP site is built by glycine 239 and glycine 313. 2 residues coordinate CDP: glycine 338 and phenylalanine 343. Phenylalanine 343 contacts ADP. Position 344 (glutamate 344) interacts with AMP. Residues glutamate 344, aspartate 375, and threonine 376 each coordinate ATP. Position 375 (aspartate 375) interacts with Mg(2+).

The protein belongs to the phosphoglycerate kinase family. Monomer. Mg(2+) is required as a cofactor.

The catalysed reaction is (2R)-3-phosphoglycerate + ATP = (2R)-3-phospho-glyceroyl phosphate + ADP. Its pathway is carbohydrate degradation; glycolysis; pyruvate from D-glyceraldehyde 3-phosphate: step 2/5. The polypeptide is Phosphoglycerate kinase (PGK) (Tetrahymena thermophila).